Consider the following 543-residue polypeptide: MLIKSQRLTLFSPLLSKTRRIPVNSHQTLVAESVITRRTLGAITATPSFHKNPVVIRRRIKLERVTRNCVRIDREIDEEEEEEEKERGDLVKQSIWEQMKEIVKFTGPAMGMWICGPLMSLIDTVVIGQGSSIELAALGPGTVLCDHMSYVFMFLSVATSNMVATSLAKQDKKEAQHQISVLLFIGLVCGLMMLLLTRLFGPWAVTAFTRGKNIEIVPAANKYIQIRGLAWPFILVGLVAQSASLGMKNSWGPLKALAAATIINGLGDTILCLFLGQGIAGAAWATTASQIVSAYMMMDSLNKEGYNAYSFAIPSPQELWKISALAAPVFISIFSKIAFYSFIIYCATSMGTHVLAAHQVMAQTYRMCNVWGEPLSQTAQSFMPEMLYGANRNLPKARTLLKSLMIIGATLGLVLGVIGTAVPGLFPGVYTHDKVIISEMHRLLIPFFMALSALPMTVSLEGTLLAGRDLKFVSSVMSSSFIIGCLTLMFVTRSGYGLLGCWFVLVGFQWGRFGLYLRRLLSPGGILNSDGPSPYTVEKIKSI.

Residues 1-30 constitute a chloroplast transit peptide; sequence MLIKSQRLTLFSPLLSKTRRIPVNSHQTLV. The stretch at 55–94 forms a coiled coil; it reads VIRRRIKLERVTRNCVRIDREIDEEEEEEEKERGDLVKQS. Transmembrane regions (helical) follow at residues 107-127, 135-155, 181-201, 228-248, 256-276, 278-298, 319-339, 342-362, 406-426, 443-463, 472-492, and 497-517; these read GPAM…TVVI, LAAL…FMFL, VLLF…RLFG, GLAW…LGMK, ALAA…LFLG, GIAG…YMMM, LWKI…KIAF, FIIY…QVMA, IIGA…PGLF, LLIP…LEGT, FVSS…MFVT, and GLLG…GLYL.

It belongs to the multi antimicrobial extrusion (MATE) (TC 2.A.66.1) family. As to expression, preferentially expressed in the epidermal cells.

Its subcellular location is the plastid. It is found in the chloroplast membrane. In terms of biological role, functions as a multidrug and toxin extrusion transporter in the export of salicylic acid (SA) from the chloroplast to the cytoplasm. Plays an essential function in plant defense via the pathogen-induced salicylic acid (SA) accumulation. Also acts as a key component of the Age-related resistance (ARR) pathway. The sequence is that of Protein DETOXIFICATION 47, chloroplastic from Arabidopsis thaliana (Mouse-ear cress).